The sequence spans 209 residues: Ribosomal RNA large subunit methyltransferase E (209 aa).

Residues Gly63, Trp65, Asp83, Asp99, and Asp124 each coordinate S-adenosyl-L-methionine. Residue Lys164 is the Proton acceptor of the active site.

It belongs to the class I-like SAM-binding methyltransferase superfamily. RNA methyltransferase RlmE family.

The protein localises to the cytoplasm. The catalysed reaction is uridine(2552) in 23S rRNA + S-adenosyl-L-methionine = 2'-O-methyluridine(2552) in 23S rRNA + S-adenosyl-L-homocysteine + H(+). Its function is as follows. Specifically methylates the uridine in position 2552 of 23S rRNA at the 2'-O position of the ribose in the fully assembled 50S ribosomal subunit. The polypeptide is Ribosomal RNA large subunit methyltransferase E (Aeromonas salmonicida (strain A449)).